Consider the following 401-residue polypeptide: MFDKQEFVSKLVTEEKAKIVLLVMDGLGDIPVNGKTPLQAANTPNLDNLAKESDLGQTIPVLPGITPGSGPGHLSLFGYDPIKYQIGRGILEALGIGVEVGEKDVVARANFATWDGKVVLDRRAGRPATEESAKVVQLLSEKIKKIEDVEITFYPGKEHRFVVKFTGEGLGDKVTDADPQKEGHPMVWAEGLDEPSKKTARIVNELIKKIAEVLKDNPKINFALIRGFSKYPDLPKFPQVYKMKAGAIATYPMYRGLAKLVGMEIIETGQTVADEIKTLKEKWNDYDFFYVHVKKTDSYGEDGKFEEKVKVIEEVDAIIPEIVSLNPDVLVITGDHSTPVPLKAHSWHPVPLLIWSKYTRRGLSQAFNEFECARGTLGTIHASDVMTLALAYAGKLEKFGA.

Belongs to the BPG-independent phosphoglycerate mutase family. A-PGAM subfamily.

The enzyme catalyses (2R)-2-phosphoglycerate = (2R)-3-phosphoglycerate. The protein operates within carbohydrate degradation; glycolysis; pyruvate from D-glyceraldehyde 3-phosphate: step 3/5. Catalyzes the interconversion of 2-phosphoglycerate and 3-phosphoglycerate. This is Probable 2,3-bisphosphoglycerate-independent phosphoglycerate mutase from Thermotoga maritima (strain ATCC 43589 / DSM 3109 / JCM 10099 / NBRC 100826 / MSB8).